The sequence spans 357 residues: Aminomethyltransferase (357 aa).

It belongs to the GcvT family. The glycine cleavage system is composed of four proteins: P, T, L and H.

It carries out the reaction N(6)-[(R)-S(8)-aminomethyldihydrolipoyl]-L-lysyl-[protein] + (6S)-5,6,7,8-tetrahydrofolate = N(6)-[(R)-dihydrolipoyl]-L-lysyl-[protein] + (6R)-5,10-methylene-5,6,7,8-tetrahydrofolate + NH4(+). Functionally, the glycine cleavage system catalyzes the degradation of glycine. The polypeptide is Aminomethyltransferase (Deinococcus deserti (strain DSM 17065 / CIP 109153 / LMG 22923 / VCD115)).